Here is a 465-residue protein sequence, read N- to C-terminus: Protein Loquacious (465 aa).

The tract at residues 1–337 (MDQENFHGSS…DSICGELEGE (337 aa)) is necessary for enhancing pre-miRNA processing by Dcr-1. The not required for interaction with Dcr-1 stretch occupies residues 1 to 379 (MDQENFHGSS…TLKNATGKKL (379 aa)). Residues 1–392 (MDQENFHGSS…QKTCLKNNKI (392 aa)) are important for homodimerization and interaction with Dcr-1. Residues 129-211 (NGLAMKTPVS…DKLIGAQLPE (83 aa)) form a sufficient for binding RNA region. A necessary for promoting preferential binding of Dcr-2 to the less stably base paired ends of siRNAs region spans residues 129 to 322 (NGLAMKTPVS…WMRLQETPID (194 aa)). Positions 135-206 (TPVSILQELL…ARALIDKLIG (72 aa)) constitute a DRBM 1 domain. Residues 209–249 (LPESPSSSAGPSVTGLTVAGSGGDGNANATGGGDASDKTVG) form an enables simultaneous binding of both DRBM 1 and 2 domains to dsRNA region. A disordered region spans residues 210–246 (PESPSSSAGPSVTGLTVAGSGGDGNANATGGGDASDK). Residues 211 to 223 (ESPSSSAGPSVTG) are compositionally biased toward polar residues. The tract at residues 220-465 (SVTGLTVAGS…LEYLKIMTKK (246 aa)) is necessary and sufficient for enhancing processing of pre-miRNAs by Dcr-1. The span at 228-242 (GSGGDGNANATGGGD) shows a compositional bias: gly residues. Residues 245-322 (DKTVGNPIGW…WMRLQETPID (78 aa)) form a sufficient for binding RNA region. The DRBM 2 domain maps to 250 to 318 (NPIGWLQEMC…AHRMWMRLQE (69 aa)). The interval 308 to 309 (AA) is necessary for binding pre-miRNA. Residues 338 to 359 (PRSSENYYGELKDISVPTLTTQ) are required for binding to Dcr-2 and to fully enhance Dcr-2 mediated cleavage of 3' overhanging termini (3'ovr) and blunt termini (BLT) dsRNAs. However, this region is dispensable for binding the dsRNA substrates. The necessary for interaction with Dcr-1 stretch occupies residues 340 to 465 (SSENYYGELK…LEYLKIMTKK (126 aa)). The interval 392–463 (IDYIKLLGEI…NALEYLKIMT (72 aa)) is sufficent for binding to Dcr-1. Residues 393–461 (DYIKLLGEIA…AQNALEYLKI (69 aa)) form the DRBM 3 domain.

Homodimer. As to quaternary structure, interacts with dicer enzyme Dcr-1. In terms of assembly, component of the miRNA-directed RNA-induced loading complex (miRLC), composed of at least Dcr-1, AGO1 and loqs isoform PB (loqs-PB), which processes pre-miRNAs and loads the resulting miRNAs into the Argonaute 1 (AGO1)-containing RNA-induced silencing complex (miRISC) to target the selective destruction of homologous RNAs. Interacts (via DRBM 3 domain) with dicer enzyme Dcr-1 (via helicase domain). Different regions of the Dcr-1-loqs-PB heterodimer collaborate to recognize, bind and position the pre-miRNA for Dcr-1 mediated cleavage. In the absence of miRNA substrates, the heterodimer favors a closed, catalytically incompetent, conformation, whereas binding of authentic pre-miRNA substrates stabilizes the relatively rare open, catalytically competent, conformation of the heterodimer. During substrate recognition, the Dcr-1 PAZ domain and pre-miRNA interact with the DRBM 1 domain of loqs-PB, which likely contributes to substrate recognition and stabilization. At the miRNA binding stage, the Dcr-1 DRBM domain and the loqs-PB DRBM domains then bind the pre-miRNA in tandem to form a tight 'belt' around the pre-miRNA stem, the pre-miRNA loop is docked in the loop-binding region formed by DUF283, DRBM and part of the helicase domain of Dcr-1, and the loqs-PB DRBM 1 and the wing domain of Dcr-1 act together to bind the 5' and 3' pre-miRNA termini within the PAZ and platform domains of Dcr-1. These interactions between the proteins and their pre-miRNA substrate stabilize a distorted form of the pre-miRNA and position the scissile phosphodiester bonds of the pre-miRNA at the RNase III catalytic cleavage sites of Dcr-1. Following Dcr-1 mediated cleavage, the miRNA duplex remains bound to loqs-PB DRBM 1, which dissociates from the Dcr-1 RNase III 1 domain but remains in contact with the PAZ and wing domains suggesting that the heterodimer presents the mature miRNA to AGO2 for loading into the RNA-induced silencing complex (miRISC). Able to interact with dicer enzyme Dcr-1. However, the relevance of such an interaction is unclear in vivo and another report found that it did not interact with Dcr-1. As to quaternary structure, monomer. Interacts (via C-terminus) with dicer enzyme Dcr-2 (via N-terminus); interaction is required for RNAi activity in producing siRNAs from a subset of endo- and exo-dsRNAs, and in the alternative siRLC, the interaction enhances the binding preference of the protein for the thermodynamically more stable ends of endogenous siRNAs. Interaction with Dcr-2 is RNA independent, however the isoform must bind both dsRNA and Dcr-2 to enhance Dcr-2 cleavage activity. Does not interact with Dcr-1. In terms of tissue distribution, strong expression in males and females. Expression in ovaries is relatively weak. Strong expression in females and relatively weak expression in males. Strong expression in ovaries.

The protein localises to the cytoplasm. The protein resides in the cytosol. Double-stranded RNA-binding protein which can function in gene silencing by acting with Dcr-1 to enhance its ATP-independent processing of a specific subset of precursor micro-RNAs (pre-miRNAs) to mature miRNAs. Some reports found it was able to enhance the efficiency of pre-miRNA processing by Dcr-1, and can shift the cleavage site of Dcr-1 altering the length of the mature miRNAs produced by Dcr-1 alone. However, in contrast to isoform PB, it is not necessary or sufficient for enhancing miRNA biogenesis, and is not required for development or female germline stem cell (GSC) maintenance. Another report also found that it decreases binding of Dcr-1 to the miRNA substrate let-7. Its function is as follows. Double-stranded RNA-binding protein which functions in gene silencing by acting with Dcr-1 to enhance its ATP-independent processing of a specific subset of precursor micro-RNAs (pre-miRNAs) to mature miRNAs. Function is essential for development and female germline stem cell (GSC) maintenance. Functions in miRNA-mediated gene silencing by enhancing the binding affinity and specific pre-miRNA processing activity of Dcr-1, and as part of the loqs-PB-Dcr-1 complex, is involved in substrate discrimination, correctly positioning the pre-miRNA in the Dcr-1 catalytic center for cleavage, and miRNA loading into the Argonaute 1 (Ago1)-containing RNA-induced silencing complex (miRISC). Increases the binding affinity of Dcr-1 to pre-miRNAs, thereby increasing dicing efficiency and broadening the range of substrates that can be processed by the dicer. It may also confer the substrate specificity of Dcr-1 towards pre-miRNAs, as in its absence Dcr-1 displays siRNA-generating activity towards long dsRNA substrates. It can also shift the cleavage site of Dcr-1 for a small number of pre-miRNAs, changing the length of the mature miRNAs produced by Dcr-1 alone. Increases the range of pre-miRNAs that can be processed by Dcr-1, by enhancing the dicing of suboptimal hairpin substrates including ones with mismatches at the dicing site. This function may also promote the generation of novel miRNA genes as it appears to have an important role in processing evolutionarily young miRNA genes, suggesting that it may also enhance dicing of substrates that have not acquired hairpin features required for efficient miRNA processing. As newly emerged miRNAs can have deleterious or beneficial effects on fitness, this function is likely part of a regulatory system that prevents excessive emergence of active miRNA genes and thus keeps them within an optimal range. Also forms a RISC loading complex (miRLC) with Dcr-1 to mediate Ago1-loading of mature miRNAs into the RNA-induced silencing complex (miRISC). In female ovaries, required for Dcr-1 to generate the twenty-three nucleotide isomiR variant of miR-307a which is able to repress its targets Gk2 and tara. Functionally, double-stranded RNA-binding protein which has an essential role in gene silencing (RNAi) by acting with Dcr-2 to enhance its ATP-dependent processing of a subset of endogenous (endo) and exogenous (exo) dsRNAs into short interfering RNAs (siRNAs). Functions in RNAi by increasing the initial binding affinity of Dcr-2 to certain dsRNA substrates, and in the absence of r2d2, may also function in siRNA loading into the Argonaute 2 (AGO2)-containing RNA-induced silencing complex (siRISC) and guide strand selection for target silencing by the siRISC. Promotes Dcr-2 cleavage of a subset of dsRNAs, including endo-dsRNAs derived from convergent transcription, inverted repeats and transposons. Also enables Dcr-2 to produce hairpin-derived endo-siRNAs in the presence of cellular inhibitory inorganic phosphate, likely by increasing the binding affinity of the enzyme to the hairpin dsRNAs allowing the dsRNA to displace phosphate bound to Dcr-2. According to many reports, the cleavage reaction mode of Dcr-2 changes according to the termini of the dsRNA substrate, with the enzyme displaying a preference for processing blunt termini (BLT), likely non-self dsRNAs, over dsRNAs with 2 nucleotides 3' overhanging (3'ovr) termini, which are typically the structure of endo-dsRNAs. According to many reports, interaction with Loqs-PD modifies the molecular recognition mechanisms of Dcr-2 towards sub-optimal 3'ovr dsRNA substrates and thus enables the dicer to cleave endo-dsRNA templates with diverse termini. However, according to another report, the mode of cleavage reaction is not affected by the presence or absence of loqs-PD. In the absence of r2d2, may also form an alternative RISC loading complex (siRLC) with Dcr-2 to mediate AGO2-loading of endo- and exo-siRNAs into the RNA-induced silencing complex (siRISC). Many reports suggest that loqs-PD and r2d2 function independently with dcr-2 in distinct siRNA pathways, and may even compete for binding to the enzyme. Loaded siRNAs serve as a guide to direct the siRISC to complementary RNAs to degrade them or prevent their translation. The siRLC plays an important role in the ATP-dependent asymmetry sensing of the duplex, and is therefore also responsible for the selection of the strand that ultimately acts as the guide siRNA for the siRISC. Thermodynamically asymmetric endo-siRNAs can be pre-oriented in the siRLC by the Loqs-PD and DCr-2 complex, which preferentially binds to the most thermodynamically stable strand prior to loading into the siRISC. Appears to be involved in promoting double-strand breaks (DSBs) following exposure to a low-dose/dose-rate (LDR) of ionizing radiation. The protein is Protein Loquacious of Drosophila melanogaster (Fruit fly).